Consider the following 432-residue polypeptide: Glutamyl-tRNA reductase (432 aa).

Residues 49–52 (TCNR), serine 107, 112–114 (ETQ), and glutamine 118 contribute to the substrate site. Cysteine 50 functions as the Nucleophile in the catalytic mechanism. Residue 186-191 (GAGEMG) coordinates NADP(+).

Belongs to the glutamyl-tRNA reductase family. As to quaternary structure, homodimer.

It catalyses the reaction (S)-4-amino-5-oxopentanoate + tRNA(Glu) + NADP(+) = L-glutamyl-tRNA(Glu) + NADPH + H(+). The protein operates within porphyrin-containing compound metabolism; protoporphyrin-IX biosynthesis; 5-aminolevulinate from L-glutamyl-tRNA(Glu): step 1/2. In terms of biological role, catalyzes the NADPH-dependent reduction of glutamyl-tRNA(Glu) to glutamate 1-semialdehyde (GSA). This chain is Glutamyl-tRNA reductase, found in Campylobacter jejuni subsp. jejuni serotype O:23/36 (strain 81-176).